The primary structure comprises 571 residues: E3 ubiquitin-protein ligase RNF168 (571 aa).

The RING-type zinc-finger motif lies at 16-55; it reads CGICMEILVEPVTLPCNHTLCKPCFQSTVEKASLCCPFCR. Ser70 carries the post-translational modification Phosphoserine. The LR motif 1 signature appears at 110–128; that stretch reads LSKPGELRREYEEEISKVA. Position 134 is a phosphoserine (Ser134). Residues 143–151 carry the UMI motif motif; sequence EEYIQRLLA. 2 disordered regions span residues 151–174 and 191–292; these read AEEEEEEKRQAEKRRRAMEEQLKS and EGSI…GADS. An MIU motif 1 motif is present at residues 168–191; sequence MEEQLKSDEELARKLSIDINNFCE. A Phosphoserine modification is found at Ser197. The segment covering 202-214 has biased composition (basic and acidic residues); the sequence is RKSDPVTPKSEKK. Lys210 is covalently cross-linked (Glycyl lysine isopeptide (Lys-Gly) (interchain with G-Cter in SUMO2)). Residues 231–242 show a composition bias toward polar residues; the sequence is PKSQFGSASHSE. Over residues 243 to 263 the composition is skewed to basic and acidic residues; that stretch reads AVQEVRKDSVSKDIDSSDRKS. Thr362 is modified (phosphothreonine). 2 disordered regions span residues 390-422 and 459-560; these read NQESSFEAVKDPCFSAKRRKVSPESSPDQEETE and KEQM…ISQK. Phosphoserine occurs at positions 411, 414, and 415. An MIU motif 2 motif is present at residues 439–462; it reads RHKQEEQDRLLALQLQKEVDKEQM. The LR motif 2 signature appears at 466 to 477; sequence RQKGSPDEYHLR. Ser470 bears the Phosphoserine mark. The segment covering 508–519 has biased composition (basic and acidic residues); sequence PTPERGSRDKNR. Composition is skewed to polar residues over residues 520-530 and 549-560; these read QVSLKMQLKQS and SAHSLQPSISQK. A Glycyl lysine isopeptide (Lys-Gly) (interchain with G-Cter in SUMO2) cross-link involves residue Lys528.

It belongs to the RNF168 family. As to quaternary structure, monomer. Interacts with UBE2N/UBC13. Sumoylated with SUMO1 by PIAS4 in response to double-strand breaks (DSBs). Post-translationally, ubiquitinated.

The protein localises to the nucleus. The catalysed reaction is S-ubiquitinyl-[E2 ubiquitin-conjugating enzyme]-L-cysteine + [acceptor protein]-L-lysine = [E2 ubiquitin-conjugating enzyme]-L-cysteine + N(6)-ubiquitinyl-[acceptor protein]-L-lysine.. It functions in the pathway protein modification; protein ubiquitination. E3 ubiquitin-protein ligase required for accumulation of repair proteins to sites of DNA damage. Acts with UBE2N/UBC13 to amplify the RNF8-dependent histone ubiquitination. Recruited to sites of DNA damage at double-strand breaks (DSBs) by binding to ubiquitinated histone H2A and H2AX and amplifies the RNF8-dependent H2A ubiquitination, promoting the formation of 'Lys-63'-linked ubiquitin conjugates. This leads to concentrate ubiquitinated histones H2A and H2AX at DNA lesions to the threshold required for recruitment of TP53BP1 and BRCA1. Also recruited at DNA interstrand cross-links (ICLs) sites and promotes accumulation of 'Lys-63'-linked ubiquitination of histones H2A and H2AX, leading to recruitment of FAAP20/C1orf86 and Fanconi anemia (FA) complex, followed by interstrand cross-link repair. H2A ubiquitination also mediates the ATM-dependent transcriptional silencing at regions flanking DSBs in cis, a mechanism to avoid collision between transcription and repair intermediates. Also involved in class switch recombination in immune system, via its role in regulation of DSBs repair. Following DNA damage, promotes the ubiquitination and degradation of JMJD2A/KDM4A in collaboration with RNF8, leading to unmask H4K20me2 mark and promote the recruitment of TP53BP1 at DNA damage sites. Not able to initiate 'Lys-63'-linked ubiquitination in vitro; possibly due to partial occlusion of the UBE2N/UBC13-binding region. Catalyzes monoubiquitination of 'Lys-13' and 'Lys-15' of nucleosomal histone H2A (H2AK13Ub and H2AK15Ub, respectively). This Homo sapiens (Human) protein is E3 ubiquitin-protein ligase RNF168.